Here is a 1392-residue protein sequence, read N- to C-terminus: Protein dispatched homolog 3 (1392 aa).

Residues 1-73 (MDTEDDPLLQ…LGWAFTNPCC (73 aa)) are Cytoplasmic-facing. Residues 16-40 (EEQEEEEATGETFLGAQKPGPQPGA) are disordered. The chain crosses the membrane as a helical span at residues 74–94 (AGLVLFLGCSIPMALSAFMFL). Residues 95–462 (YYPPLDIDIS…YEVRRTFNND (368 aa)) are Lumenal-facing. A disordered region spans residues 162-248 (GNRSRQASRA…HAAVAANQSR (87 aa)). Asn163 is a glycosylation site (N-linked (GlcNAc...) asparagine). Polar residues predominate over residues 190 to 199 (SAAQKPTANR). Residues 457–615 (RTFNNDMLLA…LVTMPAALGL (159 aa)) enclose the SSD domain. The chain crosses the membrane as a helical span at residues 463 to 483 (MLLAFISSSCIAALVYILTSC). A topological domain (cytoplasmic) is located at residue Ser484. The helical transmembrane segment at 485-505 (VFLSFFGIASIGLSCLVALFL) threads the bilayer. Residues 506 to 508 (YHV) are Lumenal-facing. The helical transmembrane segment at 509–529 (VFGIQYLGILNGVAAFVIVGI) threads the bilayer. Topologically, residues 530–573 (GVDDVFVFINTYRQATHLEDPQLRMIHTVQTAGKATFFTSLTTA) are cytoplasmic. A helical membrane pass occupies residues 574–594 (AAYAANVFSQIPAVHDFGLFM). Ser595 is a topological domain (lumenal). A helical transmembrane segment spans residues 596-616 (LIVSCCWLAVLVTMPAALGLW). Residues 617–729 (SLYLAPLESS…WVLWSAVKSR (113 aa)) are Cytoplasmic-facing. Residues 730–750 (WVIVGLFVSILILSLVFASRL) traverse the membrane as a helical segment. At 751-1182 (RPASRAPLLF…IFMEIVGVQS (432 aa)) the chain is on the lumenal side. Asn1021 carries N-linked (GlcNAc...) asparagine glycosylation. Residues 1183 to 1203 (ALCGLVLSLLICVAAVAVFTT) traverse the membrane as a helical segment. His1204 is a topological domain (cytoplasmic). Residues 1205–1225 (ILLLLPVLLSILGIVCLVVTI) form a helical membrane-spanning segment. At 1226-1291 (MYWSGWEMGA…TLEAVRHVGV (66 aa)) the chain is on the lumenal side. Residues 1292–1312 (AIVSSALTTVIATVPLFFCII) traverse the membrane as a helical segment. The Cytoplasmic portion of the chain corresponds to 1313–1320 (APFAKFGK). The helical transmembrane segment at 1321 to 1341 (IVALNTGVSILYTLTVSTALL) threads the bilayer. The Lumenal segment spans residues 1342–1358 (GIMAPSSFTRTRTSFLK). The chain crosses the membrane as a helical span at residues 1359 to 1379 (ALGAVLLAGALGLGACLVLLQ). Residues 1380 to 1392 (SGYKIPLPAGASL) are Cytoplasmic-facing.

The protein belongs to the patched family. Expressed in brain and testis.

Its subcellular location is the endoplasmic reticulum membrane. It localises to the nucleus membrane. It is found in the cytoplasmic vesicle membrane. Its function is as follows. Plays a role in neuronal proliferation and differentiation. Plays a role in the accumulation of cellular cholesterol. Involved in intracellular lipid droplet formation. May contribute to cholesterol homeostasis in neuronal cells. This is Protein dispatched homolog 3 from Homo sapiens (Human).